The primary structure comprises 212 residues: MDGRVVLIHALLTAVCSAAVGKFGRDGPHGEALHNEVLLHEGGGVASVSATAPLLGGIVEKEGGGAASGDALSELPRVAFLSKPQGPVTPKKKGNGNKRRKGKGLGKKRDPCLRKYKDFCIHGECKYIRELGAPSCICQPGYHGERCHGLLLPVEHPPSTYDHTTALAVVAVVLSSLCLVIITALLMFRCHKRGVYDVENEEKIKLGITVNH.

A signal peptide spans Met-1–Ala-18. At Ala-19–Leu-167 the chain is on the extracellular side. Residues Ser-82–Lys-108 form a disordered region. Positions Pro-90–Gly-106 are enriched in basic residues. Residues Lys-108–His-148 enclose the EGF-like domain. 3 disulfides stabilise this stretch: Cys-112–Cys-125, Cys-120–Cys-136, and Cys-138–Cys-147. The propeptide at Pro-153 to His-212 is C-terminal. A helical membrane pass occupies residues Ala-168–Phe-188. Residues Arg-189–His-212 are Cytoplasmic-facing.

As to quaternary structure, interacts with CNIH2.

The protein resides in the secreted. The protein localises to the extracellular space. It localises to the cell membrane. In terms of biological role, may be involved in macrophage-mediated cellular proliferation. It is mitogenic for fibroblasts and smooth muscle but not endothelial cells. It is able to bind EGF receptor/EGFR with higher affinity than EGF itself and is a far more potent mitogen for smooth muscle cells than EGF. Plays an important role in the proper development of cranial nerves by inhibiting the migration of the cranial neural crest cells (NCCs) into the odd-numbered neuromeres (r3 and r5) of the hindbrain Plays a role in mediating v-Jun-induced oncogenic transformation. The sequence is that of Proheparin-binding EGF-like growth factor (HBEGF) from Gallus gallus (Chicken).